The chain runs to 905 residues: DNA gyrase subunit A (905 aa).

One can recognise a Topo IIA-type catalytic domain in the interval 35 to 524 (IPDVRDGLKP…GEFDQDIEDL (490 aa)). The active-site O-(5'-phospho-DNA)-tyrosine intermediate is the Y123. Residues 551–557 (QKRGGKG) carry the GyrA-box motif. Residues 882 to 905 (IAESSDDNEEDSEFEEEVAEEGSE) are disordered. The span at 885 to 905 (SSDDNEEDSEFEEEVAEEGSE) shows a compositional bias: acidic residues.

Belongs to the type II topoisomerase GyrA/ParC subunit family. Heterotetramer, composed of two GyrA and two GyrB chains. In the heterotetramer, GyrA contains the active site tyrosine that forms a transient covalent intermediate with DNA, while GyrB binds cofactors and catalyzes ATP hydrolysis.

The protein resides in the cytoplasm. The catalysed reaction is ATP-dependent breakage, passage and rejoining of double-stranded DNA.. Functionally, a type II topoisomerase that negatively supercoils closed circular double-stranded (ds) DNA in an ATP-dependent manner to modulate DNA topology and maintain chromosomes in an underwound state. Negative supercoiling favors strand separation, and DNA replication, transcription, recombination and repair, all of which involve strand separation. Also able to catalyze the interconversion of other topological isomers of dsDNA rings, including catenanes and knotted rings. Type II topoisomerases break and join 2 DNA strands simultaneously in an ATP-dependent manner. The polypeptide is DNA gyrase subunit A (Rickettsia bellii (strain RML369-C)).